The chain runs to 203 residues: Chromophore lyase CpcT/CpeT 3 (203 aa).

It belongs to the CpcT/CpeT biliprotein lyase family.

Its function is as follows. Covalently attaches a chromophore to Cys residue(s) of phycobiliproteins. This Gloeobacter violaceus (strain ATCC 29082 / PCC 7421) protein is Chromophore lyase CpcT/CpeT 3.